Consider the following 116-residue polypeptide: MRSAMLFAAVLALSLAWTFGAVCEEPQGQGGRLSKDSDLYQLPPSLLRRLYDSRPVSLEGLLKVLSKASVGPKETSLPQKRDMHDFFVGLMGKRNSQPDTPTDVVEENTPSFGILK.

Residues 1 to 20 (MRSAMLFAAVLALSLAWTFG) form the signal peptide. A propeptide spanning residues 21–79 (AVCEEPQGQGGRLSKDSDLYQLPPSLLRRLYDSRPVSLEGLLKVLSKASVGPKETSLPQ) is cleaved from the precursor. Position 91 is a methionine amide (methionine 91). Residues 93–116 (KRNSQPDTPTDVVEENTPSFGILK) form a disordered region. A propeptide spanning residues 95 to 116 (NSQPDTPTDVVEENTPSFGILK) is cleaved from the precursor.

The protein belongs to the tachykinin family.

The protein resides in the secreted. Its function is as follows. Tachykinins are active peptides which excite neurons, evoke behavioral responses, are potent vasodilators and secretagogues, and contract (directly or indirectly) many smooth muscles. Is a critical central regulator of gonadal function. This chain is Tachykinin-3 (Tac3), found in Mus musculus (Mouse).